Consider the following 561-residue polypeptide: NADH-quinone oxidoreductase subunit C/D (561 aa).

The NADH dehydrogenase I subunit C stretch occupies residues 1–152; sequence MLEKFSSKFN…YQVLYESDDL (152 aa). The tract at residues 176 to 561 is NADH dehydrogenase I subunit D; the sequence is KYTFLNIGPS…LNIIAGELDR (386 aa).

In the N-terminal section; belongs to the complex I 30 kDa subunit family. This sequence in the C-terminal section; belongs to the complex I 49 kDa subunit family. As to quaternary structure, NDH-1 is composed of 13 different subunits. Subunits NuoB, CD, E, F, and G constitute the peripheral sector of the complex.

The protein localises to the cell inner membrane. The catalysed reaction is a quinone + NADH + 5 H(+)(in) = a quinol + NAD(+) + 4 H(+)(out). Its function is as follows. NDH-1 shuttles electrons from NADH, via FMN and iron-sulfur (Fe-S) centers, to quinones in the respiratory chain. The immediate electron acceptor for the enzyme in this species is believed to be ubiquinone. Couples the redox reaction to proton translocation (for every two electrons transferred, four hydrogen ions are translocated across the cytoplasmic membrane), and thus conserves the redox energy in a proton gradient. In Campylobacter fetus subsp. fetus (strain 82-40), this protein is NADH-quinone oxidoreductase subunit C/D.